The sequence spans 311 residues: Probable branched-chain-amino-acid aminotransferase (311 aa).

N6-(pyridoxal phosphate)lysine is present on Lys-160.

It belongs to the class-IV pyridoxal-phosphate-dependent aminotransferase family. Pyridoxal 5'-phosphate serves as cofactor.

It catalyses the reaction L-leucine + 2-oxoglutarate = 4-methyl-2-oxopentanoate + L-glutamate. The enzyme catalyses L-isoleucine + 2-oxoglutarate = (S)-3-methyl-2-oxopentanoate + L-glutamate. It carries out the reaction L-valine + 2-oxoglutarate = 3-methyl-2-oxobutanoate + L-glutamate. It participates in amino-acid biosynthesis; L-isoleucine biosynthesis; L-isoleucine from 2-oxobutanoate: step 4/4. It functions in the pathway amino-acid biosynthesis; L-leucine biosynthesis; L-leucine from 3-methyl-2-oxobutanoate: step 4/4. Its pathway is amino-acid biosynthesis; L-valine biosynthesis; L-valine from pyruvate: step 4/4. Functionally, acts on leucine, isoleucine and valine. The protein is Probable branched-chain-amino-acid aminotransferase (ilvE) of Aquifex aeolicus (strain VF5).